Reading from the N-terminus, the 455-residue chain is Single-stranded DNA-binding protein homolog sam-10 (455 aa).

Residues 19-51 (ARDRLTSYIYEYLQQTGASKTAETFKEEVLSTN) enclose the LisH domain. Disordered regions lie at residues 217-249 (PPPG…LNSP), 281-302 (SDHQ…TAGG), 314-343 (GPGS…HQPK), and 357-442 (EALT…NGEI). Low complexity-rich tracts occupy residues 288-298 (AGPAAAAPGAT) and 321-336 (VATT…SSIG). Over residues 396-406 (HSVNNNVNPGT) the composition is skewed to polar residues. Low complexity predominate over residues 407 to 421 (PGSNPLSNPMSNPPL).

As to expression, ubiquitously expressed with higher expression in the head and tail ganglia, the vulva and PLM neurons.

Its subcellular location is the cytoplasm. The protein resides in the nucleus. Its function is as follows. Involved cell autonomously in PLM neuron pre-synaptic differentiation by negatively regulating prk-2 expression and in neurite branch positioning. This Caenorhabditis elegans protein is Single-stranded DNA-binding protein homolog sam-10.